Consider the following 244-residue polypeptide: ATP synthase subunit a (244 aa).

A run of 7 helical transmembrane segments spans residues Phe20–Ile40, Gly81–Met101, Gln113–Phe133, Phe140–Ile160, Leu176–Tyr196, Phe202–Ala222, and Phe223–Leu243.

Belongs to the ATPase A chain family. As to quaternary structure, F-type ATPases have 2 components, CF(1) - the catalytic core - and CF(0) - the membrane proton channel. CF(1) has five subunits: alpha(3), beta(3), gamma(1), delta(1), epsilon(1). CF(0) has three main subunits: a, b and c.

The protein localises to the mitochondrion inner membrane. Functionally, mitochondrial membrane ATP synthase (F(1)F(0) ATP synthase or Complex V) produces ATP from ADP in the presence of a proton gradient across the membrane which is generated by electron transport complexes of the respiratory chain. F-type ATPases consist of two structural domains, F(1) - containing the extramembraneous catalytic core and F(0) - containing the membrane proton channel, linked together by a central stalk and a peripheral stalk. During catalysis, ATP synthesis in the catalytic domain of F(1) is coupled via a rotary mechanism of the central stalk subunits to proton translocation. Key component of the proton channel; it may play a direct role in the translocation of protons across the membrane. The chain is ATP synthase subunit a (atp6) from Dictyostelium citrinum (Slime mold).